A 343-amino-acid polypeptide reads, in one-letter code: Phenylalanine--tRNA ligase alpha subunit (343 aa).

Residue Glu268 coordinates Mg(2+).

The protein belongs to the class-II aminoacyl-tRNA synthetase family. Phe-tRNA synthetase alpha subunit type 1 subfamily. In terms of assembly, tetramer of two alpha and two beta subunits. It depends on Mg(2+) as a cofactor.

The protein localises to the cytoplasm. The enzyme catalyses tRNA(Phe) + L-phenylalanine + ATP = L-phenylalanyl-tRNA(Phe) + AMP + diphosphate + H(+). This chain is Phenylalanine--tRNA ligase alpha subunit, found in Cupriavidus taiwanensis (strain DSM 17343 / BCRC 17206 / CCUG 44338 / CIP 107171 / LMG 19424 / R1) (Ralstonia taiwanensis (strain LMG 19424)).